Consider the following 69-residue polypeptide: Arabinogalactan protein 24 (69 aa).

A signal peptide spans 1 to 25; that stretch reads MMMMTKMFVQIAVVCLLATMAVVSA. Pro34, Pro36, Pro38, and Pro40 each carry 4-hydroxyproline. O-linked (Ara...) hydroxyproline glycosylation is found at Pro34, Pro36, Pro38, and Pro40. A lipid anchor (GPI-anchor amidated serine) is attached at Ser42. Residues 43 to 69 constitute a propeptide, removed in mature form; it reads SSTVVSATNMFTVLAIAAVALVVGSNH.

It belongs to the AG-peptide AGP family. In terms of processing, contains 4-hydroxyproline; hydroxylated on Pro-34, Pro-36, Pro-38 and Pro-40. O-glycosylated on hydroxyprolines; noncontiguous hydroxylproline residues are glycosylated with arabinogalactan.

Its subcellular location is the cell membrane. Proteoglycan that seems to be implicated in diverse developmental roles such as differentiation, cell-cell recognition, embryogenesis and programmed cell death. This Arabidopsis thaliana (Mouse-ear cress) protein is Arabinogalactan protein 24.